Here is a 459-residue protein sequence, read N- to C-terminus: FBD-associated F-box protein At4g13985 (459 aa).

The region spanning 18–64 (VDRLRNLPDCLLFKILLNLPTKDVVKLSVLSRRWRNVWRYVPGLDLE) is the F-box domain. In terms of domain architecture, FBD spans 375 to 429 (KEGANILPGPRRFLTSLEYVKIAKPMAAEASEIKLKLVSYFLENSTILKKLTLCL).

In Arabidopsis thaliana (Mouse-ear cress), this protein is FBD-associated F-box protein At4g13985.